A 102-amino-acid chain; its full sequence is uncharacterized protein (102 aa).

A run of 3 helical transmembrane segments spans residues 14–34 (IKNWINFIKPIITIVGIVISA), 35–55 (VAFTISILWGMLFLILFLILI), and 76–96 (ILSIIGSIIIISIIVYSHCYI).

It localises to the cell membrane. This is an uncharacterized protein from Methanocaldococcus jannaschii (strain ATCC 43067 / DSM 2661 / JAL-1 / JCM 10045 / NBRC 100440) (Methanococcus jannaschii).